A 195-amino-acid polypeptide reads, in one-letter code: Probable GTP-binding protein EngB (195 aa).

The EngB-type G domain occupies 22–194 (LKGEVAFVGR…LDLISTLLKE (173 aa)). Residues 30–37 (GRSNVGKS), 56–60 (GKTRS), 74–77 (DLPG), 141–144 (TKMD), and 173–175 (TSS) each bind GTP. Residues serine 37 and threonine 58 each contribute to the Mg(2+) site.

Belongs to the TRAFAC class TrmE-Era-EngA-EngB-Septin-like GTPase superfamily. EngB GTPase family. The cofactor is Mg(2+).

Necessary for normal cell division and for the maintenance of normal septation. The protein is Probable GTP-binding protein EngB of Thermotoga maritima (strain ATCC 43589 / DSM 3109 / JCM 10099 / NBRC 100826 / MSB8).